A 757-amino-acid chain; its full sequence is 5-methyltetrahydropteroyltriglutamate--homocysteine methyltransferase (757 aa).

5-methyltetrahydropteroyltri-L-glutamate contacts are provided by residues 17–20 and K115; that span reads RELK. Residues 430-432 and E483 each bind L-homocysteine; that span reads IGS. L-methionine contacts are provided by residues 430-432 and E483; that span reads IGS. Residues 514 to 515 and W560 each bind 5-methyltetrahydropteroyltri-L-glutamate; that span reads RC. D598 lines the L-homocysteine pocket. Residue D598 participates in L-methionine binding. Position 604 (E604) interacts with 5-methyltetrahydropteroyltri-L-glutamate. Zn(2+) contacts are provided by H640, C642, and E664. H693 (proton donor) is an active-site residue. Residue C725 participates in Zn(2+) binding.

This sequence belongs to the vitamin-B12 independent methionine synthase family. It depends on Zn(2+) as a cofactor.

It catalyses the reaction 5-methyltetrahydropteroyltri-L-glutamate + L-homocysteine = tetrahydropteroyltri-L-glutamate + L-methionine. The protein operates within amino-acid biosynthesis; L-methionine biosynthesis via de novo pathway; L-methionine from L-homocysteine (MetE route): step 1/1. Catalyzes the transfer of a methyl group from 5-methyltetrahydrofolate to homocysteine resulting in methionine formation. This is 5-methyltetrahydropteroyltriglutamate--homocysteine methyltransferase from Buchnera aphidicola subsp. Schizaphis graminum (strain Sg).